The following is a 215-amino-acid chain: 3-isopropylmalate dehydratase small subunit (215 aa).

It belongs to the LeuD family. LeuD type 1 subfamily. In terms of assembly, heterodimer of LeuC and LeuD.

The catalysed reaction is (2R,3S)-3-isopropylmalate = (2S)-2-isopropylmalate. The protein operates within amino-acid biosynthesis; L-leucine biosynthesis; L-leucine from 3-methyl-2-oxobutanoate: step 2/4. Its function is as follows. Catalyzes the isomerization between 2-isopropylmalate and 3-isopropylmalate, via the formation of 2-isopropylmaleate. This Xylella fastidiosa (strain M23) protein is 3-isopropylmalate dehydratase small subunit.